Consider the following 486-residue polypeptide: Malonate-semialdehyde dehydrogenase (486 aa).

Positions 154, 178, 181, 182, and 231 each coordinate NAD(+). Cysteine 286 (nucleophile) is an active-site residue. Glutamate 386 is an NAD(+) binding site.

This sequence belongs to the aldehyde dehydrogenase family. IolA subfamily. In terms of assembly, homotetramer.

It catalyses the reaction 3-oxopropanoate + NAD(+) + CoA + H2O = hydrogencarbonate + acetyl-CoA + NADH + H(+). The enzyme catalyses 2-methyl-3-oxopropanoate + NAD(+) + CoA + H2O = propanoyl-CoA + hydrogencarbonate + NADH + H(+). Its pathway is polyol metabolism; myo-inositol degradation into acetyl-CoA; acetyl-CoA from myo-inositol: step 7/7. Functionally, catalyzes the oxidation of malonate semialdehyde (MSA) and methylmalonate semialdehyde (MMSA) into acetyl-CoA and propanoyl-CoA, respectively. Is involved in a myo-inositol catabolic pathway. Bicarbonate, and not CO2, is the end-product of the enzymatic reaction. The protein is Malonate-semialdehyde dehydrogenase of Bacillus cereus (strain AH187).